The primary structure comprises 96 residues: UPF0235 protein KPK_0722 (96 aa).

This sequence belongs to the UPF0235 family.

This chain is UPF0235 protein KPK_0722, found in Klebsiella pneumoniae (strain 342).